Consider the following 109-residue polypeptide: Nucleoid-associated protein HAPS_1040 (109 aa).

Positions 1–21 (MFGKGGLGGLMKQAQQMQERM) are disordered. A compositionally biased stretch (low complexity) spans 10–19 (LMKQAQQMQE).

Belongs to the YbaB/EbfC family. As to quaternary structure, homodimer.

The protein resides in the cytoplasm. The protein localises to the nucleoid. In terms of biological role, binds to DNA and alters its conformation. May be involved in regulation of gene expression, nucleoid organization and DNA protection. The sequence is that of Nucleoid-associated protein HAPS_1040 from Glaesserella parasuis serovar 5 (strain SH0165) (Haemophilus parasuis).